Consider the following 99-residue polypeptide: Aspartyl/glutamyl-tRNA(Asn/Gln) amidotransferase subunit C (99 aa).

This sequence belongs to the GatC family. In terms of assembly, heterotrimer of A, B and C subunits.

It carries out the reaction L-glutamyl-tRNA(Gln) + L-glutamine + ATP + H2O = L-glutaminyl-tRNA(Gln) + L-glutamate + ADP + phosphate + H(+). It catalyses the reaction L-aspartyl-tRNA(Asn) + L-glutamine + ATP + H2O = L-asparaginyl-tRNA(Asn) + L-glutamate + ADP + phosphate + 2 H(+). In terms of biological role, allows the formation of correctly charged Asn-tRNA(Asn) or Gln-tRNA(Gln) through the transamidation of misacylated Asp-tRNA(Asn) or Glu-tRNA(Gln) in organisms which lack either or both of asparaginyl-tRNA or glutaminyl-tRNA synthetases. The reaction takes place in the presence of glutamine and ATP through an activated phospho-Asp-tRNA(Asn) or phospho-Glu-tRNA(Gln). The protein is Aspartyl/glutamyl-tRNA(Asn/Gln) amidotransferase subunit C of Thermobifida fusca (strain YX).